Consider the following 698-residue polypeptide: Probable Xaa-Pro aminopeptidase P (698 aa).

4 residues coordinate Mn(2+): Asp509, Asp520, Glu604, and Glu618.

This sequence belongs to the peptidase M24B family. Mn(2+) is required as a cofactor.

The catalysed reaction is Release of any N-terminal amino acid, including proline, that is linked to proline, even from a dipeptide or tripeptide.. Catalyzes the removal of a penultimate prolyl residue from the N-termini of peptides. This is Probable Xaa-Pro aminopeptidase P (AMPP) from Arthroderma benhamiae (strain ATCC MYA-4681 / CBS 112371) (Trichophyton mentagrophytes).